A 293-amino-acid chain; its full sequence is Protein translocase subunit SecF (293 aa).

The next 6 membrane-spanning stretches (helical) occupy residues 10–30 (ARIF…SMFA), 130–150 (VKSA…YITI), 158–178 (LAAI…FSVL), 185–205 (SFVA…IVVF), 244–264 (LFAV…FSFA), and 267–287 (VGFC…WLFF).

The protein belongs to the SecD/SecF family. SecF subfamily. Forms a complex with SecD. Part of the essential Sec protein translocation apparatus which comprises SecA, SecYEG and auxiliary proteins SecDF. Other proteins may also be involved.

It localises to the cell membrane. Functionally, part of the Sec protein translocase complex. Interacts with the SecYEG preprotein conducting channel. SecDF uses the proton motive force (PMF) to complete protein translocation after the ATP-dependent function of SecA. The protein is Protein translocase subunit SecF of Acidaminococcus fermentans (strain ATCC 25085 / DSM 20731 / CCUG 9996 / CIP 106432 / VR4).